A 280-amino-acid chain; its full sequence is Phosphonates import ATP-binding protein PhnC (280 aa).

An ABC transporter domain is found at 4–239 (ITVTNLHKSY…VIDDIYGNIQ (236 aa)). 36-43 (GESGAGKS) contacts ATP. Residues 246–280 (GDDANADVAPTTSSDGGTDAAGGPDQQPASDPHLS) form a disordered region.

Belongs to the ABC transporter superfamily. Phosphonates importer (TC 3.A.1.9.1) family. The complex is composed of two ATP-binding proteins (PhnC), two transmembrane proteins (PhnE) and a solute-binding protein (PhnD).

Its subcellular location is the cell membrane. It carries out the reaction phosphonate(out) + ATP + H2O = phosphonate(in) + ADP + phosphate + H(+). In terms of biological role, part of the ABC transporter complex PhnCDE involved in phosphonates import. Responsible for energy coupling to the transport system. The sequence is that of Phosphonates import ATP-binding protein PhnC from Halobacterium salinarum (strain ATCC 700922 / JCM 11081 / NRC-1) (Halobacterium halobium).